The sequence spans 245 residues: tRNA pseudouridine synthase A (245 aa).

The Nucleophile role is filled by aspartate 52. Tyrosine 111 serves as a coordination point for substrate.

Belongs to the tRNA pseudouridine synthase TruA family. As to quaternary structure, homodimer.

The catalysed reaction is uridine(38/39/40) in tRNA = pseudouridine(38/39/40) in tRNA. Functionally, formation of pseudouridine at positions 38, 39 and 40 in the anticodon stem and loop of transfer RNAs. This Wolbachia pipientis subsp. Culex pipiens (strain wPip) protein is tRNA pseudouridine synthase A.